Here is a 334-residue protein sequence, read N- to C-terminus: Anthranilate phosphoribosyltransferase (334 aa).

5-phospho-alpha-D-ribose 1-diphosphate contacts are provided by residues Gly-79, 82–83 (GD), Ser-87, 89–92 (NIST), 107–115 (KAGNRSISS), and Ser-119. Residue Gly-79 participates in anthranilate binding. Ser-91 serves as a coordination point for Mg(2+). Asn-110 serves as a coordination point for anthranilate. Anthranilate is bound at residue Arg-165. Mg(2+) contacts are provided by Asp-224 and Glu-225.

This sequence belongs to the anthranilate phosphoribosyltransferase family. Homodimer. Mg(2+) serves as cofactor.

The enzyme catalyses N-(5-phospho-beta-D-ribosyl)anthranilate + diphosphate = 5-phospho-alpha-D-ribose 1-diphosphate + anthranilate. It participates in amino-acid biosynthesis; L-tryptophan biosynthesis; L-tryptophan from chorismate: step 2/5. Functionally, catalyzes the transfer of the phosphoribosyl group of 5-phosphorylribose-1-pyrophosphate (PRPP) to anthranilate to yield N-(5'-phosphoribosyl)-anthranilate (PRA). This chain is Anthranilate phosphoribosyltransferase, found in Streptococcus thermophilus (strain CNRZ 1066).